The sequence spans 332 residues: Methylthioribose-1-phosphate isomerase (332 aa).

Residues 44–46, arginine 87, and glutamine 192 contribute to the substrate site; that span reads RGA. The Proton donor role is filled by aspartate 233. Substrate is bound at residue 243-244; that stretch reads NK.

Belongs to the eIF-2B alpha/beta/delta subunits family. MtnA subfamily.

The enzyme catalyses 5-(methylsulfanyl)-alpha-D-ribose 1-phosphate = 5-(methylsulfanyl)-D-ribulose 1-phosphate. It functions in the pathway amino-acid biosynthesis; L-methionine biosynthesis via salvage pathway; L-methionine from S-methyl-5-thio-alpha-D-ribose 1-phosphate: step 1/6. In terms of biological role, catalyzes the interconversion of methylthioribose-1-phosphate (MTR-1-P) into methylthioribulose-1-phosphate (MTRu-1-P). This is Methylthioribose-1-phosphate isomerase from Dehalococcoides mccartyi (strain CBDB1).